We begin with the raw amino-acid sequence, 453 residues long: MSGDAAALWPRVAEGLRRDLGARTFDHWLKPVRFADYCALSGVVTLETASRFSANWINERFGDRLELAWRQQLPAVRSVSVRGGVAATERAATLASVPLPTFDAPAAPAANPALLGFDPRLSFDRFVVARSNILAANAARRMAMVERPQFNPLYLCSGTGQGKTHLLQAIAQDYAAAHPTATIILMSAEKFMLEFVGAMRGGDMMAFKARLRAADLLLLDDLQFVIGKNSTQEELLHTIDDLMTAGKRLVVTADRPPAMLDGVEARLLSRLSGGLVADIEAPEDDLRERIIRQRLAAMPMVEVPDDVIAWLVKHFTRNIRELEGALNKLLAYAALTGARIDLMLAEDRLAENVRSARPRITIDEIQRAVCAHYRLDRSDMSSKRRVRAVARPRQVAMYLAKELTPRSYPEIGRRFGGRDHSTVIHAVRTVEALRVADSELDAEIAAIRRSLNS.

Positions 1–76 (MSGDAAALWP…LAWRQQLPAV (76 aa)) are domain I, interacts with DnaA modulators. The tract at residues 76 to 115 (VRSVSVRGGVAATERAATLASVPLPTFDAPAAPAANPALL) is domain II. The tract at residues 116-333 (GFDPRLSFDR…GALNKLLAYA (218 aa)) is domain III, AAA+ region. ATP contacts are provided by glycine 160, glycine 162, lysine 163, and threonine 164. The tract at residues 334–453 (ALTGARIDLM…IAAIRRSLNS (120 aa)) is domain IV, binds dsDNA.

This sequence belongs to the DnaA family. Oligomerizes as a right-handed, spiral filament on DNA at oriC.

The protein resides in the cytoplasm. Plays an essential role in the initiation and regulation of chromosomal replication. ATP-DnaA binds to the origin of replication (oriC) to initiate formation of the DNA replication initiation complex once per cell cycle. Binds the DnaA box (a 9 base pair repeat at the origin) and separates the double-stranded (ds)DNA. Forms a right-handed helical filament on oriC DNA; dsDNA binds to the exterior of the filament while single-stranded (ss)DNA is stabiized in the filament's interior. The ATP-DnaA-oriC complex binds and stabilizes one strand of the AT-rich DNA unwinding element (DUE), permitting loading of DNA polymerase. After initiation quickly degrades to an ADP-DnaA complex that is not apt for DNA replication. Binds acidic phospholipids. This chain is Chromosomal replication initiator protein DnaA, found in Sphingopyxis alaskensis (strain DSM 13593 / LMG 18877 / RB2256) (Sphingomonas alaskensis).